Reading from the N-terminus, the 113-residue chain is Probable UPF0122 protein (113 aa).

This sequence belongs to the UPF0122 family.

In terms of biological role, might take part in the signal recognition particle (SRP) pathway. This is inferred from the conservation of its genetic proximity to ftsY/ffh. May be a regulatory protein. The chain is Probable UPF0122 protein from Mycoplasma mycoides.